A 457-amino-acid polypeptide reads, in one-letter code: Serine/threonine-protein phosphatase 2A activator 2 (457 aa).

Disordered regions lie at residues 387-407 and 426-457; these read DAHG…GEGQ and AEQE…IPFD. A compositionally biased stretch (basic residues) spans 391–400; sequence HIHPAGKPHA.

It belongs to the PTPA-type PPIase family.

Its subcellular location is the cytoplasm. The enzyme catalyses [protein]-peptidylproline (omega=180) = [protein]-peptidylproline (omega=0). Its function is as follows. PPIases accelerate the folding of proteins. It catalyzes the cis-trans isomerization of proline imidic peptide bonds in oligopeptides. Acts as a regulatory subunit for PP2A-like phosphatases modulating their activity or substrate specificity, probably by inducing a conformational change in the catalytic subunit, a direct target of the PPIase. Can reactivate inactive phosphatase PP2A-phosphatase methylesterase complexes (PP2Ai) in presence of ATP and Mg(2+) by dissociating the inactive form from the complex. The chain is Serine/threonine-protein phosphatase 2A activator 2 (RRD2) from Mycosarcoma maydis (Corn smut fungus).